A 502-amino-acid chain; its full sequence is MADDLSLGFTTVWNAVVSELNGESNTDDEATNDSTLVTPLTPQQRAWLNLVQPLTIIEGFALLSVPSSFVQNEIERHLRTPITDALSRRLGQQIQLGVRIAPPSTDHIDDNSSSADVLLTDDCGTDTDENYGEPLTGEYQGLPTYFTERPHHTESTVTGGTSLNRRYTFETFVIGASNRFAHAAALAIAEAPARAYNPLFIWGESGLGKTHLLHAAGNYAQRLFPGMRVKYVSTEEFTNDFINSLRDDRKVAFKRSYRDVDVLLVDDIQFIEGKEGIQEEFFHTFNTLHNANKQIVISSDRPPKQLATLEDRLRTRFEWGLITDVQPPELETRIAILRKKAQMERLAVPGDVLELIASSIERNIRELEGALIRVTAFASLNKTAIDKALAEIVLRDLIADASTMQISAATIMTATAEYFDTTIEELRGPGKTRALAQSRQIAMYLCRELTDLSLPKIGQAFGRDHTTVMYAQRKILSEMAERREVFDHVKELTTRIRQRSKR.

The interval 1 to 112 (MADDLSLGFT…PSTDHIDDNS (112 aa)) is domain I, interacts with DnaA modulators. The domain II stretch occupies residues 113–161 (SSADVLLTDDCGTDTDENYGEPLTGEYQGLPTYFTERPHHTESTVTGGT). A domain III, AAA+ region region spans residues 162–378 (SLNRRYTFET…GALIRVTAFA (217 aa)). Positions 206, 208, 209, and 210 each coordinate ATP. The interval 379 to 502 (SLNKTAIDKA…TTRIRQRSKR (124 aa)) is domain IV, binds dsDNA.

Belongs to the DnaA family. As to quaternary structure, oligomerizes as a right-handed, spiral filament on DNA at oriC.

It localises to the cytoplasm. In terms of biological role, plays an essential role in the initiation and regulation of chromosomal replication. ATP-DnaA binds to the origin of replication (oriC) to initiate formation of the DNA replication initiation complex once per cell cycle. Binds the DnaA box (a 9 base pair repeat at the origin) and separates the double-stranded (ds)DNA. Forms a right-handed helical filament on oriC DNA; dsDNA binds to the exterior of the filament while single-stranded (ss)DNA is stabiized in the filament's interior. The ATP-DnaA-oriC complex binds and stabilizes one strand of the AT-rich DNA unwinding element (DUE), permitting loading of DNA polymerase. After initiation quickly degrades to an ADP-DnaA complex that is not apt for DNA replication. Binds acidic phospholipids. The sequence is that of Chromosomal replication initiator protein DnaA from Mycobacterium leprae (strain TN).